A 91-amino-acid chain; its full sequence is Small ribosomal subunit protein uS19 (91 aa).

It belongs to the universal ribosomal protein uS19 family.

Protein S19 forms a complex with S13 that binds strongly to the 16S ribosomal RNA. This is Small ribosomal subunit protein uS19 from Hahella chejuensis (strain KCTC 2396).